The following is a 232-amino-acid chain: Putative N-acetylmannosamine-6-phosphate 2-epimerase (232 aa).

This sequence belongs to the NanE family.

The catalysed reaction is an N-acyl-D-glucosamine 6-phosphate = an N-acyl-D-mannosamine 6-phosphate. The protein operates within amino-sugar metabolism; N-acetylneuraminate degradation; D-fructose 6-phosphate from N-acetylneuraminate: step 3/5. Converts N-acetylmannosamine-6-phosphate (ManNAc-6-P) to N-acetylglucosamine-6-phosphate (GlcNAc-6-P). The polypeptide is Putative N-acetylmannosamine-6-phosphate 2-epimerase (Proteus mirabilis (strain HI4320)).